Here is a 384-residue protein sequence, read N- to C-terminus: Kinesin-like protein KIF25 (384 aa).

A disordered region spans residues 1–20 (MTWTSGQLQREKQARPGSGA). The Kinesin motor domain maps to 7–363 (QLQREKQARP…LGFGIRARQV (357 aa)). ATP is bound at residue 65–72 (GQTGSGKS). 2 disordered regions span residues 217-256 (DQAC…NPAG) and 362-384 (QVQR…RRPD).

Belongs to the TRAFAC class myosin-kinesin ATPase superfamily. Kinesin family. Homotetramer.

The protein resides in the cytoplasm. It is found in the cytoskeleton. Its subcellular location is the microtubule organizing center. The protein localises to the centrosome. Functionally, minus-end microtubule-dependent motor protein. Acts as a negative regulator of centrosome separation required to prevent premature centrosome separation during interphase. Required to maintain a centered nucleus to ensure that the spindle is stably oriented at the onset of mitosis. May also act as a negative regulator of amino acid starvation-induced autophagy. In Homo sapiens (Human), this protein is Kinesin-like protein KIF25.